Reading from the N-terminus, the 242-residue chain is Segregation and condensation protein A (242 aa).

The protein belongs to the ScpA family. As to quaternary structure, component of a cohesin-like complex composed of ScpA, ScpB and the Smc homodimer, in which ScpA and ScpB bind to the head domain of Smc. The presence of the three proteins is required for the association of the complex with DNA.

It localises to the cytoplasm. Functionally, participates in chromosomal partition during cell division. May act via the formation of a condensin-like complex containing Smc and ScpB that pull DNA away from mid-cell into both cell halves. The chain is Segregation and condensation protein A from Streptococcus pneumoniae (strain Taiwan19F-14).